Reading from the N-terminus, the 374-residue chain is Beta-1,3-N-acetylglucosaminyltransferase lunatic fringe (374 aa).

The Cytoplasmic portion of the chain corresponds to 1 to 8 (MLKTYRGK). Residues 9 to 29 (VVVSLAGATVTCLGFLLFLSQ) form a helical; Signal-anchor for type II membrane protein membrane-spanning segment. Residues 30-374 (HQRIQADGMQ…TPWCPPQVAY (345 aa)) lie on the Lumenal side of the membrane. Residue asparagine 40 is glycosylated (N-linked (GlcNAc...) asparagine). Residues 80-100 (RSRREADKPSEAPGAATDAPP) are disordered. Position 123 (arginine 123) interacts with substrate. An N-linked (GlcNAc...) asparagine glycan is attached at asparagine 162. Intrachain disulfides connect cysteine 163-cysteine 174 and cysteine 192-cysteine 255. Aspartate 196 contacts substrate. A Mn(2+)-binding site is contributed by aspartate 197. The active site involves aspartate 285. Mn(2+) is bound at residue histidine 309. An intrachain disulfide couples cysteine 359 to cysteine 368.

Belongs to the glycosyltransferase 31 family. Mn(2+) is required as a cofactor. Co(2+) serves as cofactor. A soluble form may be derived from the membrane form by proteolytic processing. In the embryo, expressed along the A-P axis of the neural tube, within the lateral plate mesoderm, in the presomitic mesoderm and the somites, in specific rhombomeres of the hindbrain (even-numbered rhombomeres) and in the otic vesicles.

It is found in the golgi apparatus membrane. It carries out the reaction 3-O-(alpha-L-fucosyl)-L-threonyl-[EGF-like domain protein] + UDP-N-acetyl-alpha-D-glucosamine = 3-O-(N-acetyl-beta-D-glucosaminyl-(1-&gt;3)-alpha-L-fucosyl)-L-threonyl-[EGF-like domain protein] + UDP + H(+). It catalyses the reaction 3-O-(alpha-L-fucosyl)-L-seryl-[EGF-like domain protein] + UDP-N-acetyl-alpha-D-glucosamine = 3-O-(N-acetyl-beta-D-glucosaminyl-(1-&gt;3)-alpha-L-fucosyl)-L-seryl-[EGF-like domain protein] + UDP + H(+). Glycosyltransferase that initiates the elongation of O-linked fucose residues attached to EGF-like repeats in the extracellular domain of Notch molecules. Involved in the correct formation of boundaries in the somites and hindbrain. Required for Delta-Notch-mediated induction of hypochord cells at the lateral borders of the midline precursor domain. In Danio rerio (Zebrafish), this protein is Beta-1,3-N-acetylglucosaminyltransferase lunatic fringe (lfng).